Here is a 512-residue protein sequence, read N- to C-terminus: Maturase K (512 aa).

The protein belongs to the intron maturase 2 family. MatK subfamily.

The protein resides in the plastid. Its subcellular location is the chloroplast. In terms of biological role, usually encoded in the trnK tRNA gene intron. Probably assists in splicing its own and other chloroplast group II introns. In Oenothera argillicola (Appalachian evening primrose), this protein is Maturase K.